The primary structure comprises 305 residues: Ribonuclease BN (305 aa).

Residues H64, H66, D68, H69, H141, D212, and H270 each coordinate Zn(2+). D68 serves as the catalytic Proton acceptor.

This sequence belongs to the RNase Z family. RNase BN subfamily. In terms of assembly, homodimer. Zn(2+) serves as cofactor.

Its function is as follows. Zinc phosphodiesterase, which has both exoribonuclease and endoribonuclease activities. This Citrobacter koseri (strain ATCC BAA-895 / CDC 4225-83 / SGSC4696) protein is Ribonuclease BN.